The sequence spans 328 residues: Cytochrome f (328 aa).

An N-terminal signal peptide occupies residues 1 to 44; sequence MRNPDTLGLWTKTMVALRRFTVLAIATVSVFLITDLGLPQAASA. Positions 45, 66, 69, and 70 each coordinate heme. A helical membrane pass occupies residues 296-313; it reads FLVLFLAGIMLSQILLVL.

Belongs to the cytochrome f family. As to quaternary structure, the 4 large subunits of the cytochrome b6-f complex are cytochrome b6, subunit IV (17 kDa polypeptide, PetD), cytochrome f and the Rieske protein, while the 4 small subunits are PetG, PetL, PetM and PetN. The complex functions as a dimer. It depends on heme as a cofactor.

The protein localises to the cellular thylakoid membrane. Functionally, component of the cytochrome b6-f complex, which mediates electron transfer between photosystem II (PSII) and photosystem I (PSI), cyclic electron flow around PSI, and state transitions. The chain is Cytochrome f (petA) from Synechocystis sp. (strain ATCC 27184 / PCC 6803 / Kazusa).